The sequence spans 209 residues: Superoxide dismutase [Mn/Fe] (209 aa).

Positions 38, 90, 172, and 176 each coordinate Fe(3+). Mn(2+)-binding residues include His38, His90, Asp172, and His176.

It belongs to the iron/manganese superoxide dismutase family. Requires Mn(2+) as cofactor. Fe(3+) is required as a cofactor.

It carries out the reaction 2 superoxide + 2 H(+) = H2O2 + O2. Its function is as follows. Destroys superoxide anion radicals which are normally produced within the cells and which are toxic to biological systems. Catalyzes the dismutation of superoxide anion radicals into O2 and H2O2 by successive reduction and oxidation of the transition metal ion at the active site. The polypeptide is Superoxide dismutase [Mn/Fe] (sodB) (Rickettsia conorii (strain ATCC VR-613 / Malish 7)).